Here is a 605-residue protein sequence, read N- to C-terminus: Translation factor GUF1 homolog, chloroplastic (605 aa).

One can recognise a tr-type G domain in the interval arginine 7–arginine 189. GTP-binding positions include alanine 16–serine 23, aspartate 82–histidine 86, and asparagine 136–aspartate 139.

The protein belongs to the TRAFAC class translation factor GTPase superfamily. Classic translation factor GTPase family. LepA subfamily.

It is found in the plastid. Its subcellular location is the chloroplast. It carries out the reaction GTP + H2O = GDP + phosphate + H(+). Promotes chloroplast protein synthesis. May act as a fidelity factor of the translation reaction, by catalyzing a one-codon backward translocation of tRNAs on improperly translocated ribosomes. In Ostreococcus lucimarinus (strain CCE9901), this protein is Translation factor GUF1 homolog, chloroplastic.